Reading from the N-terminus, the 412-residue chain is Glutamate-1-semialdehyde 2,1-aminomutase (412 aa).

Lys260 is modified (N6-(pyridoxal phosphate)lysine).

The protein belongs to the class-III pyridoxal-phosphate-dependent aminotransferase family. HemL subfamily. Pyridoxal 5'-phosphate is required as a cofactor.

The protein localises to the cytoplasm. The enzyme catalyses (S)-4-amino-5-oxopentanoate = 5-aminolevulinate. It participates in porphyrin-containing compound metabolism; protoporphyrin-IX biosynthesis; 5-aminolevulinate from L-glutamyl-tRNA(Glu): step 2/2. The polypeptide is Glutamate-1-semialdehyde 2,1-aminomutase (Methanocorpusculum labreanum (strain ATCC 43576 / DSM 4855 / Z)).